Here is a 389-residue protein sequence, read N- to C-terminus: MGTNLSVPNPLGFFPDHQLDPAFKANSENPDWDLNPNKDNWPDANKVGVGAFGPGFTPPHGGLLGWSPQAQGLLTTVPAAPPPASTNRQSGRQPTPLSPPLRDTHPQAMQWNSTTFHQTLQDPGVRALYFPAGGSSSGTVSPAQNTVSAISSILSKTGDPVPNMENIASGLLGPLLVLQAGFFLLTKILTIPQSLDSWWTSLNFLGGTPVCLGQNSQSQISSHSPTCCPPICPGYRWMCLRRFIIFLCILLLCLIFLLVLLDYQGMLPVCPLIPGSSTTSTGPCKTCTTPAQGTSMFPSCCCTKPTDGNCTCIPIPSSWAFAKYLWEWASVRFSWLSLLVPFVQWFVGLSPTVWLSVIWMIWFWGPSLYNILSPFMPLLPIFFCLWVYI.

N-acetylmethionine is present on methionine 1. Glycine 2 carries the N-myristoyl glycine; by host lipid modification. The tract at residues 2–108 (GTNLSVPNPL…PPLRDTHPQA (107 aa)) is pre-S1. The segment at 2-163 (GTNLSVPNPL…LSKTGDPVPN (162 aa)) is pre-S. Residues 2–170 (GTNLSVPNPL…VPNMENIASG (169 aa)) lie on the Virion surface; in external conformation side of the membrane. Over 2–242 (GTNLSVPNPL…PGYRWMCLRR (241 aa)) the chain is Intravirion; in internal conformation. The disordered stretch occupies residues 74–103 (LTTVPAAPPPASTNRQSGRQPTPLSPPLRD). A compositionally biased stretch (polar residues) spans 85-95 (STNRQSGRQPT). The interval 109 to 163 (MQWNSTTFHQTLQDPGVRALYFPAGGSSSGTVSPAQNTVSAISSILSKTGDPVPN) is pre-S2. The helical transmembrane segment at 171 to 191 (LLGPLLVLQAGFFLLTKILTI) threads the bilayer. Residues 192 to 242 (PQSLDSWWTSLNFLGGTPVCLGQNSQSQISSHSPTCCPPICPGYRWMCLRR) are Intravirion; in external conformation-facing. The chain crosses the membrane as a helical span at residues 243 to 263 (FIIFLCILLLCLIFLLVLLDY). The Virion surface portion of the chain corresponds to 264–337 (QGMLPVCPLI…WASVRFSWLS (74 aa)). N-linked (GlcNAc...) asparagine; by host glycosylation occurs at asparagine 309. Residues 338–358 (LLVPFVQWFVGLSPTVWLSVI) traverse the membrane as a helical segment. The Intravirion portion of the chain corresponds to 359–364 (WMIWFW). A helical transmembrane segment spans residues 365-387 (GPSLYNILSPFMPLLPIFFCLWV). Residues 388–389 (YI) are Virion surface-facing.

It belongs to the orthohepadnavirus major surface antigen family. In terms of assembly, interacts (via its myristoylated pre-S1 region) with the host SLC10A1/NTCP; this interaction is essential for viral entry. As to quaternary structure, in its internal form (Li-HBsAg), interacts with the capsid protein and with the isoform S. Interacts with host chaperone CANX. Associates with host chaperone CANX through its pre-S2 N glycan; this association may be essential for isoform M proper secretion. In terms of assembly, interacts with isoform L. Interacts with the antigens of satellite virus HDV (HDVAgs); this interaction is required for encapsidation of HDV genomic RNA. Isoform M is N-terminally acetylated by host at a ratio of 90%, and N-glycosylated by host at the pre-S2 region. Post-translationally, myristoylated; this modification is essential for its interaction with the host protein SLC10A1/NTCP.

Its subcellular location is the virion membrane. The large envelope protein exists in two topological conformations, one which is termed 'external' or Le-HBsAg and the other 'internal' or Li-HBsAg. In its external conformation the protein attaches the virus to cell receptors and thereby initiating infection. This interaction determines the species specificity and liver tropism. This attachment induces virion internalization predominantly through caveolin-mediated endocytosis. The large envelope protein also assures fusion between virion membrane and endosomal membrane. In its internal conformation the protein plays a role in virion morphogenesis and mediates the contact with the nucleocapsid like a matrix protein. In terms of biological role, the middle envelope protein plays an important role in the budding of the virion. It is involved in the induction of budding in a nucleocapsid independent way. In this process the majority of envelope proteins bud to form subviral lipoprotein particles of 22 nm of diameter that do not contain a nucleocapsid. The sequence is that of Large envelope protein from Hepatitis B virus genotype B/C subtype adw (isolate Okinawa/pODW282/1998) (HBV-B).